The primary structure comprises 464 residues: Glutamate--tRNA ligase (464 aa).

A 'HIGH' region motif is present at residues 8–18 (PSPTGYMHLGN). Positions 96, 98, 123, and 125 each coordinate Zn(2+). The short motif at 240 to 244 (KLSKR) is the 'KMSKS' region element. K243 contacts ATP.

Belongs to the class-I aminoacyl-tRNA synthetase family. Glutamate--tRNA ligase type 1 subfamily. Monomer. Zn(2+) serves as cofactor.

It is found in the cytoplasm. The enzyme catalyses tRNA(Glu) + L-glutamate + ATP = L-glutamyl-tRNA(Glu) + AMP + diphosphate. Functionally, catalyzes the attachment of glutamate to tRNA(Glu) in a two-step reaction: glutamate is first activated by ATP to form Glu-AMP and then transferred to the acceptor end of tRNA(Glu). The sequence is that of Glutamate--tRNA ligase from Hydrogenobaculum sp. (strain Y04AAS1).